Consider the following 247-residue polypeptide: Protein LIFEGUARD 4 (247 aa).

7 helical membrane passes run 42 to 62 (VYSI…TVVF), 75 to 95 (AGLA…CPLY), 105 to 125 (YLLL…TCAF), 130 to 150 (VILE…VYTF), 165 to 185 (FLFG…FFPL), 188 to 208 (ISVM…IVYD), and 222 to 242 (IWAA…LLTI).

This sequence belongs to the BI1 family.

The protein resides in the membrane. In Arabidopsis thaliana (Mouse-ear cress), this protein is Protein LIFEGUARD 4.